We begin with the raw amino-acid sequence, 634 residues long: UPF0329 protein ECU07_1850/ECU10_0050 (634 aa).

Basic and acidic residues-rich tracts occupy residues 354 to 365 (REEREKREESKG) and 397 to 407 (GESKEEDRGEE). The segment at 354–438 (REEREKREES…KGSGEKRISE (85 aa)) is disordered. Residues 408–417 (GGVEAEDPLE) are compositionally biased toward acidic residues.

The protein belongs to the UPF0329 family.

The chain is UPF0329 protein ECU07_1850/ECU10_0050 from Encephalitozoon cuniculi (strain GB-M1) (Microsporidian parasite).